We begin with the raw amino-acid sequence, 524 residues long: Translation initiation factor eIF2B subunit delta (524 aa).

The tract at residues 1–174 (MAAVAVAVRE…RQQVPTRKDY (174 aa)) is disordered. Ala2 is modified (N-acetylalanine). Basic and acidic residues-rich tracts occupy residues 8–20 (VREE…KTEL) and 31–40 (LTQEEKLQLR). At Ser12 the chain carries Phosphoserine. Basic residues predominate over residues 41–51 (KEKKQQKKKRK). Thr86 carries the post-translational modification Phosphothreonine. 2 stretches are compositionally biased toward basic and acidic residues: residues 96-121 (SKAE…RKGE) and 161-174 (RKPD…RKDY). Residues 171 to 180 (RKDYGSKVSL) form a may bind the chemical integrated stress response (ISR) inhibitor ISRIB region.

Belongs to the eIF-2B alpha/beta/delta subunits family. Component of the translation initiation factor 2B (eIF2B) complex which is a heterodecamer of two sets of five different subunits: alpha, beta, gamma, delta and epsilon. Subunits alpha, beta and delta comprise a regulatory subcomplex and subunits epsilon and gamma comprise a catalytic subcomplex. Within the complex, the hexameric regulatory complex resides at the center, with the two heterodimeric catalytic subcomplexes bound on opposite sides.

Its subcellular location is the cytoplasm. The protein localises to the cytosol. With respect to regulation, activated by the chemical integrated stress response (ISR) inhibitor ISRIB which stimulates guanine nucleotide exchange factor activity for both phosphorylated and unphosphorylated eIF2. In terms of biological role, acts as a component of the translation initiation factor 2B (eIF2B) complex, which catalyzes the exchange of GDP for GTP on eukaryotic initiation factor 2 (eIF2) gamma subunit. Its guanine nucleotide exchange factor activity is repressed when bound to eIF2 complex phosphorylated on the alpha subunit, thereby limiting the amount of methionyl-initiator methionine tRNA available to the ribosome and consequently global translation is repressed. The sequence is that of Translation initiation factor eIF2B subunit delta (Eif2b4) from Rattus norvegicus (Rat).